The primary structure comprises 415 residues: Serine hydroxymethyltransferase (415 aa).

Residues leucine 119 and 123-125 (GHL) contribute to the (6S)-5,6,7,8-tetrahydrofolate site. Lysine 228 carries the post-translational modification N6-(pyridoxal phosphate)lysine.

The protein belongs to the SHMT family. Homodimer. Requires pyridoxal 5'-phosphate as cofactor.

It localises to the cytoplasm. It carries out the reaction (6R)-5,10-methylene-5,6,7,8-tetrahydrofolate + glycine + H2O = (6S)-5,6,7,8-tetrahydrofolate + L-serine. It functions in the pathway one-carbon metabolism; tetrahydrofolate interconversion. Its pathway is amino-acid biosynthesis; glycine biosynthesis; glycine from L-serine: step 1/1. Functionally, catalyzes the reversible interconversion of serine and glycine with tetrahydrofolate (THF) serving as the one-carbon carrier. This reaction serves as the major source of one-carbon groups required for the biosynthesis of purines, thymidylate, methionine, and other important biomolecules. Also exhibits THF-independent aldolase activity toward beta-hydroxyamino acids, producing glycine and aldehydes, via a retro-aldol mechanism. This is Serine hydroxymethyltransferase from Coprothermobacter proteolyticus (strain ATCC 35245 / DSM 5265 / OCM 4 / BT).